We begin with the raw amino-acid sequence, 274 residues long: UPF0173 metal-dependent hydrolase A2cp1_1196 (274 aa).

Belongs to the UPF0173 family.

The sequence is that of UPF0173 metal-dependent hydrolase A2cp1_1196 from Anaeromyxobacter dehalogenans (strain 2CP-1 / ATCC BAA-258).